The following is a 93-amino-acid chain: Allatostatin C (93 aa).

The N-terminal stretch at 1 to 23 is a signal peptide; that stretch reads MSSVRNIAALALVLLVLAEWSAA. A propeptide spanning residues 24–61 is cleaved from the precursor; the sequence is MPTTDKDKERLLNTVDLIDDDGSIETALINYLFTKQIV. A disulfide bridge connects residues C83 and C90.

The protein resides in the secreted. In terms of biological role, inhibits juvenile hormone biosynthesis. This is Allatostatin C from Camponotus floridanus (Florida carpenter ant).